A 1704-amino-acid chain; its full sequence is Arf-GAP with Rho-GAP domain, ANK repeat and PH domain-containing protein 2 (1704 aa).

The SAM domain occupies 6–70; it reads EVNVDIKDFL…LKQLQIILSK (65 aa). The residue at position 77 (Tyr-77) is a Phosphotyrosine. A disordered region spans residues 126 to 161; the sequence is NLEDSDASVERSQYPQSDDKLSPPKRDFPTAEEPHL. Residues 142–160 are compositionally biased toward basic and acidic residues; it reads SDDKLSPPKRDFPTAEEPH. 2 PH domains span residues 482–574 and 587–679; these read KKVK…NALK and TPEK…QSIA. The Arf-GAP domain occupies 676–811; sequence QSIAETLSDY…TLLASLTKEE (136 aa). The C4-type zinc finger occupies 700-723; sequence CADCKAPDPDWASINLCVVICKKC. PH domains follow at residues 878-1003 and 1014-1114; these read DIHS…KHFV and DYDL…AGTD. Residues 1116-1297 enclose the Rho-GAP domain; the sequence is NALQDQQLSK…DLINNYVEIF (182 aa). One can recognise a Ras-associating domain in the interval 1326–1420; that stretch reads GDLLIEVYVE…AYLVVKRFLT (95 aa). A PH 5 domain is found at 1434–1537; sequence GSIKEGILKI…WMTSIFIAQH (104 aa). Ser-1632 is subject to Phosphoserine. A disordered region spans residues 1636-1675; sequence LEDTEPEAPLGQPKGHKGLKTLRKTEDRNSKATLDSDHKL. Residues 1658–1675 show a composition bias toward basic and acidic residues; sequence RKTEDRNSKATLDSDHKL.

As to expression, detected in brain, thymus, lymph node, thyroid, spinal cord, trachea, heart, skeletal muscle, spleen, kidney, liver, placenta, lung and peripheral blood leukocytes.

It localises to the cytoplasm. Functionally, phosphatidylinositol 3,4,5-trisphosphate-dependent GTPase-activating protein that modulates actin cytoskeleton remodeling by regulating ARF and RHO family members. Is activated by phosphatidylinositol 3,4,5-trisphosphate (PtdIns(3,4,5)P3) binding. Can be activated by phosphatidylinositol 3,4-bisphosphate (PtdIns(3,4,5)P2) binding, albeit with lower efficiency. This Homo sapiens (Human) protein is Arf-GAP with Rho-GAP domain, ANK repeat and PH domain-containing protein 2 (ARAP2).